Reading from the N-terminus, the 346-residue chain is L-threonine dehydratase catabolic TdcB (346 aa).

59–60 (FT) contacts AMP. Lysine 64 carries the post-translational modification N6-(pyridoxal phosphate)lysine. Residues glutamine 94, 125–126 (GY), and asparagine 321 each bind AMP.

The protein belongs to the serine/threonine dehydratase family. In the native structure, TdcB is in a dimeric form, whereas in the TdcB-AMP complex, it exists in a tetrameric form (dimer of dimers). It depends on pyridoxal 5'-phosphate as a cofactor.

The enzyme catalyses L-threonine = 2-oxobutanoate + NH4(+). Its pathway is amino-acid degradation; L-threonine degradation via propanoate pathway; propanoate from L-threonine: step 1/4. With respect to regulation, each protein molecule can bind up to four molecules of AMP, which act as an allosteric activator to the enzyme. Catalyzes the anaerobic formation of alpha-ketobutyrate and ammonia from threonine in a two-step reaction. The first step involved a dehydration of threonine and a production of enamine intermediates (aminocrotonate), which tautomerizes to its imine form (iminobutyrate). Both intermediates are unstable and short-lived. The second step is the nonenzymatic hydrolysis of the enamine/imine intermediates to form 2-ketobutyrate and free ammonia. In the low water environment of the cell, the second step is accelerated by RidA. The protein is L-threonine dehydratase catabolic TdcB (tdcB) of Staphylococcus aureus (strain bovine RF122 / ET3-1).